Reading from the N-terminus, the 277-residue chain is General transcription factor IIF subunit 2 (277 aa).

It belongs to the TFIIF beta subunit family. Heterodimer of an alpha and a beta subunit.

The protein resides in the nucleus. In terms of biological role, TFIIF is a general transcription initiation factor that binds to RNA polymerase II and helps to recruit it to the initiation complex in collaboration with TFIIB. The sequence is that of General transcription factor IIF subunit 2 (TfIIFbeta) from Drosophila melanogaster (Fruit fly).